The primary structure comprises 1118 residues: Protein translocase subunit SecA (1118 aa).

ATP contacts are provided by residues Gln-176, 194–198 (GEGKT), and Asp-693. Residues 1034–1056 (QQPVQQPKYRETKDEAGSAFGGG) form a disordered region.

This sequence belongs to the SecA family. Monomer and homodimer. Part of the essential Sec protein translocation apparatus which comprises SecA, SecYEG and auxiliary proteins SecDF. Other proteins may also be involved.

Its subcellular location is the cell inner membrane. The protein resides in the cytoplasm. The enzyme catalyses ATP + H2O + cellular proteinSide 1 = ADP + phosphate + cellular proteinSide 2.. In terms of biological role, part of the Sec protein translocase complex. Interacts with the SecYEG preprotein conducting channel. Has a central role in coupling the hydrolysis of ATP to the transfer of proteins into and across the cell membrane, serving as an ATP-driven molecular motor driving the stepwise translocation of polypeptide chains across the membrane. The sequence is that of Protein translocase subunit SecA from Cytophaga hutchinsonii (strain ATCC 33406 / DSM 1761 / CIP 103989 / NBRC 15051 / NCIMB 9469 / D465).